The primary structure comprises 790 residues: LPS-assembly protein LptD (790 aa).

Residues Met-1–Ala-20 form the signal peptide.

It belongs to the LptD family. Component of the lipopolysaccharide transport and assembly complex. Interacts with LptE and LptA.

It is found in the cell outer membrane. Functionally, together with LptE, is involved in the assembly of lipopolysaccharide (LPS) at the surface of the outer membrane. The protein is LPS-assembly protein LptD of Bordetella bronchiseptica (strain ATCC BAA-588 / NCTC 13252 / RB50) (Alcaligenes bronchisepticus).